The sequence spans 252 residues: 3-dehydroquinate dehydratase (252 aa).

Residues serine 21, 46–48 (EWR), and arginine 82 each bind 3-dehydroquinate. The active-site Proton donor/acceptor is histidine 143. Catalysis depends on lysine 170, which acts as the Schiff-base intermediate with substrate. The 3-dehydroquinate site is built by arginine 213, serine 232, and glutamine 236.

This sequence belongs to the type-I 3-dehydroquinase family. In terms of assembly, homodimer.

It carries out the reaction 3-dehydroquinate = 3-dehydroshikimate + H2O. It functions in the pathway metabolic intermediate biosynthesis; chorismate biosynthesis; chorismate from D-erythrose 4-phosphate and phosphoenolpyruvate: step 3/7. Functionally, involved in the third step of the chorismate pathway, which leads to the biosynthesis of aromatic amino acids. Catalyzes the cis-dehydration of 3-dehydroquinate (DHQ) and introduces the first double bond of the aromatic ring to yield 3-dehydroshikimate. The chain is 3-dehydroquinate dehydratase from Escherichia coli O157:H7.